A 334-amino-acid chain; its full sequence is Adenosine deaminase (334 aa).

Zn(2+) is bound by residues histidine 16 and histidine 18. Residues histidine 18, aspartate 20, and glycine 173 each contribute to the substrate site. Histidine 200 serves as a coordination point for Zn(2+). The active-site Proton donor is the glutamate 203. Aspartate 281 is a binding site for Zn(2+).

This sequence belongs to the metallo-dependent hydrolases superfamily. Adenosine and AMP deaminases family. Adenosine deaminase subfamily. It depends on Zn(2+) as a cofactor.

It carries out the reaction adenosine + H2O + H(+) = inosine + NH4(+). It catalyses the reaction 2'-deoxyadenosine + H2O + H(+) = 2'-deoxyinosine + NH4(+). In terms of biological role, catalyzes the hydrolytic deamination of adenosine and 2-deoxyadenosine. This Clostridium acetobutylicum (strain ATCC 824 / DSM 792 / JCM 1419 / IAM 19013 / LMG 5710 / NBRC 13948 / NRRL B-527 / VKM B-1787 / 2291 / W) protein is Adenosine deaminase.